Reading from the N-terminus, the 350-residue chain is Uroporphyrinogen decarboxylase (350 aa).

Substrate contacts are provided by residues 28 to 32, aspartate 78, tyrosine 155, serine 210, and histidine 325; that span reads RQAGR.

Belongs to the uroporphyrinogen decarboxylase family. Homodimer.

The protein localises to the cytoplasm. It carries out the reaction uroporphyrinogen III + 4 H(+) = coproporphyrinogen III + 4 CO2. Its pathway is porphyrin-containing compound metabolism; protoporphyrin-IX biosynthesis; coproporphyrinogen-III from 5-aminolevulinate: step 4/4. Its function is as follows. Catalyzes the decarboxylation of four acetate groups of uroporphyrinogen-III to yield coproporphyrinogen-III. The sequence is that of Uroporphyrinogen decarboxylase from Trichormus variabilis (strain ATCC 29413 / PCC 7937) (Anabaena variabilis).